Reading from the N-terminus, the 216-residue chain is 3-isopropylmalate dehydratase small subunit 2 (216 aa).

It belongs to the LeuD family. LeuD type 1 subfamily. As to quaternary structure, heterodimer of LeuC and LeuD.

It catalyses the reaction (2R,3S)-3-isopropylmalate = (2S)-2-isopropylmalate. It participates in amino-acid biosynthesis; L-leucine biosynthesis; L-leucine from 3-methyl-2-oxobutanoate: step 2/4. Functionally, catalyzes the isomerization between 2-isopropylmalate and 3-isopropylmalate, via the formation of 2-isopropylmaleate. This Bordetella pertussis (strain Tohama I / ATCC BAA-589 / NCTC 13251) protein is 3-isopropylmalate dehydratase small subunit 2.